We begin with the raw amino-acid sequence, 287 residues long: Putative holocytochrome-c1 synthase (287 aa).

The segment covering 1–12 (MRGFGSDSSQAS) has biased composition (polar residues). 2 disordered regions span residues 1 to 63 (MRGF…QPSS) and 81 to 100 (QSQS…SAPL). Composition is skewed to low complexity over residues 31-63 (QARA…QPSS) and 81-92 (QSQSANSTQQAQ).

It belongs to the cytochrome c-type heme lyase family.

The protein resides in the mitochondrion inner membrane. It carries out the reaction holo-[cytochrome c] = apo-[cytochrome c] + heme b. Its function is as follows. Probable lyase that catalyzes the covalent linking of the heme group to the cytochrome C apoprotein to produce the mature functional cytochrome. This is Putative holocytochrome-c1 synthase from Chaetomium thermophilum (strain DSM 1495 / CBS 144.50 / IMI 039719) (Thermochaetoides thermophila).